A 364-amino-acid chain; its full sequence is Coproporphyrin III ferrochelatase (364 aa).

Fe-coproporphyrin III contacts are provided by Arg29 and Tyr118. Positions 169 and 250 each coordinate Fe(2+).

It belongs to the ferrochelatase family.

It localises to the cytoplasm. It catalyses the reaction Fe-coproporphyrin III + 2 H(+) = coproporphyrin III + Fe(2+). The protein operates within porphyrin-containing compound metabolism; protoheme biosynthesis. In terms of biological role, involved in coproporphyrin-dependent heme b biosynthesis. Catalyzes the insertion of ferrous iron into coproporphyrin III to form Fe-coproporphyrin III. In Streptococcus pneumoniae (strain Hungary19A-6), this protein is Coproporphyrin III ferrochelatase.